The chain runs to 414 residues: Multifunctional CCA protein (414 aa).

G8 and R11 together coordinate ATP. Positions 8 and 11 each coordinate CTP. Residues D21 and D23 each contribute to the Mg(2+) site. ATP contacts are provided by R91, R137, and R140. The CTP site is built by R91, R137, and R140. Positions T228–W329 constitute an HD domain.

Belongs to the tRNA nucleotidyltransferase/poly(A) polymerase family. Bacterial CCA-adding enzyme type 1 subfamily. In terms of assembly, monomer. Can also form homodimers and oligomers. Requires Mg(2+) as cofactor. The cofactor is Ni(2+).

It catalyses the reaction a tRNA precursor + 2 CTP + ATP = a tRNA with a 3' CCA end + 3 diphosphate. The catalysed reaction is a tRNA with a 3' CCA end + 2 CTP + ATP = a tRNA with a 3' CCACCA end + 3 diphosphate. In terms of biological role, catalyzes the addition and repair of the essential 3'-terminal CCA sequence in tRNAs without using a nucleic acid template. Adds these three nucleotides in the order of C, C, and A to the tRNA nucleotide-73, using CTP and ATP as substrates and producing inorganic pyrophosphate. tRNA 3'-terminal CCA addition is required both for tRNA processing and repair. Also involved in tRNA surveillance by mediating tandem CCA addition to generate a CCACCA at the 3' terminus of unstable tRNAs. While stable tRNAs receive only 3'-terminal CCA, unstable tRNAs are marked with CCACCA and rapidly degraded. The protein is Multifunctional CCA protein of Shewanella frigidimarina (strain NCIMB 400).